A 369-amino-acid polypeptide reads, in one-letter code: MDLHRTPLHDLCVTTGGRMVPFAGWEMPVQFSGLVAEHTAVRQRVGLFDISHMGVLRIEGSNPKDALQTLVPTDLHRIGPGQACYSVLLNESGGIRDDLIVYDLGQTNSDQGEASLIVVINAACAAADTAWISEQLTPQGLKVTDEKGDGILLALQGPEALARMEQLSGVDLHALPRFAHRMLDLTGLSRPVFCARTGYTGEDGVELLLAREDGRNLWNRLVADGVTPCGLGARDTLRLEAAMHLYGQDMDADTTPFEAGLGWLVHLEMPSTFTGRAALERAADSGPSRRLVGLKLKGRAIARHGYPVIHNGEQAGAITSGSWSPTLQEAIALAYVPTALAKVGQELGVEIRGQVQAATVVRRPFYRHP.

It belongs to the GcvT family. As to quaternary structure, the glycine cleavage system is composed of four proteins: P, T, L and H.

The catalysed reaction is N(6)-[(R)-S(8)-aminomethyldihydrolipoyl]-L-lysyl-[protein] + (6S)-5,6,7,8-tetrahydrofolate = N(6)-[(R)-dihydrolipoyl]-L-lysyl-[protein] + (6R)-5,10-methylene-5,6,7,8-tetrahydrofolate + NH4(+). Functionally, the glycine cleavage system catalyzes the degradation of glycine. This is Aminomethyltransferase from Synechococcus sp. (strain WH7803).